The sequence spans 240 residues: Adenylate dimethylallyltransferase (240 aa).

It belongs to the isopentenyl transferase family.

It catalyses the reaction dimethylallyl diphosphate + AMP = N(6)-(dimethylallyl)adenosine 5'-phosphate + diphosphate. Transfers dimethylallyl groups to AMP as part of the biosynthesis of cytokinin phytohormones. The chain is Adenylate dimethylallyltransferase (ipt) from Agrobacterium vitis (Rhizobium vitis).